A 104-amino-acid chain; its full sequence is Phosphoribosyl-ATP pyrophosphatase (104 aa).

It belongs to the PRA-PH family.

It is found in the cytoplasm. It catalyses the reaction 1-(5-phospho-beta-D-ribosyl)-ATP + H2O = 1-(5-phospho-beta-D-ribosyl)-5'-AMP + diphosphate + H(+). It participates in amino-acid biosynthesis; L-histidine biosynthesis; L-histidine from 5-phospho-alpha-D-ribose 1-diphosphate: step 2/9. This is Phosphoribosyl-ATP pyrophosphatase from Rhizobium rhizogenes (strain K84 / ATCC BAA-868) (Agrobacterium radiobacter).